The following is a 218-amino-acid chain: Imidazole glycerol phosphate synthase subunit HisH (218 aa).

Residues 5–213 (RLAVIDYEAG…VEFVARCSPL (209 aa)) enclose the Glutamine amidotransferase type-1 domain. C83 serves as the catalytic Nucleophile. Active-site residues include H188 and E190.

In terms of assembly, heterodimer of HisH and HisF.

Its subcellular location is the cytoplasm. It carries out the reaction 5-[(5-phospho-1-deoxy-D-ribulos-1-ylimino)methylamino]-1-(5-phospho-beta-D-ribosyl)imidazole-4-carboxamide + L-glutamine = D-erythro-1-(imidazol-4-yl)glycerol 3-phosphate + 5-amino-1-(5-phospho-beta-D-ribosyl)imidazole-4-carboxamide + L-glutamate + H(+). The catalysed reaction is L-glutamine + H2O = L-glutamate + NH4(+). The protein operates within amino-acid biosynthesis; L-histidine biosynthesis; L-histidine from 5-phospho-alpha-D-ribose 1-diphosphate: step 5/9. IGPS catalyzes the conversion of PRFAR and glutamine to IGP, AICAR and glutamate. The HisH subunit catalyzes the hydrolysis of glutamine to glutamate and ammonia as part of the synthesis of IGP and AICAR. The resulting ammonia molecule is channeled to the active site of HisF. The chain is Imidazole glycerol phosphate synthase subunit HisH from Synechococcus sp. (strain JA-2-3B'a(2-13)) (Cyanobacteria bacterium Yellowstone B-Prime).